We begin with the raw amino-acid sequence, 376 residues long: S-adenosylmethionine synthase (376 aa).

Histidine 15 provides a ligand contact to ATP. Aspartate 17 is a Mg(2+) binding site. A K(+)-binding site is contributed by glutamate 43. Glutamate 56 and glutamine 92 together coordinate L-methionine. The interval 92-102 (QSKEIANQVDR) is flexible loop. ATP-binding positions include 156-158 (DMK), aspartate 231, 237-238 (RK), alanine 254, and lysine 258. An L-methionine-binding site is contributed by aspartate 231. Lysine 262 contributes to the L-methionine binding site.

This sequence belongs to the AdoMet synthase family. Homotetramer; dimer of dimers. The cofactor is Mg(2+). K(+) serves as cofactor.

It is found in the cytoplasm. The enzyme catalyses L-methionine + ATP + H2O = S-adenosyl-L-methionine + phosphate + diphosphate. It participates in amino-acid biosynthesis; S-adenosyl-L-methionine biosynthesis; S-adenosyl-L-methionine from L-methionine: step 1/1. Functionally, catalyzes the formation of S-adenosylmethionine (AdoMet) from methionine and ATP. The overall synthetic reaction is composed of two sequential steps, AdoMet formation and the subsequent tripolyphosphate hydrolysis which occurs prior to release of AdoMet from the enzyme. The polypeptide is S-adenosylmethionine synthase (Mycoplasmopsis pulmonis (strain UAB CTIP) (Mycoplasma pulmonis)).